The following is a 909-amino-acid chain: Golgin subfamily A member 6-like protein 2 (909 aa).

Residues 1 to 11 (MWPQPHLPPHP) are compositionally biased toward pro residues. Disordered stretches follow at residues 1-88 (MWPQ…ASHQ), 300-362 (ERLR…EQEE), 381-408 (QEKQ…RLRE), 425-494 (KMRE…QRLP), and 524-909 (EEMW…QSSL). A compositionally biased stretch (basic and acidic residues) spans 13 to 31 (MSEKTRQNKLAEAKKKFTD). A compositionally biased stretch (polar residues) spans 53 to 77 (NNGTNPETTTSEGCHSPEDTQQNRA). Residues 78–88 (QLKEEKKASHQ) show a composition bias toward basic and acidic residues. Positions 192–526 (HKKADRYIEE…EEKIRDQEEM (335 aa)) form a coiled coil. 2 stretches are compositionally biased toward basic and acidic residues: residues 425-478 (KMRE…KQEE) and 524-542 (EEMW…MREQ). Residues 607-620 (AGGEEDAGAGEEDM) show a composition bias toward acidic residues. Composition is skewed to gly residues over residues 641–654 (GGGG…GEDA) and 676–689 (GAGG…GEDV). A compositionally biased stretch (basic residues) spans 692 to 719 (GRRRCGSSRGCRNRRRSCGNTRRCRSRR). Low complexity predominate over residues 746 to 755 (AGAEDVAAGG). Acidic residues predominate over residues 757–766 (DAGEEEDAGG). Over residues 791–871 (GAGGEDVGAG…AGGEDVGAGG (81 aa)) the composition is skewed to gly residues. Positions 872 to 892 (DAREGGEDTRSEREDAGEAAR) are enriched in basic and acidic residues.

This sequence belongs to the GOLGA6 family.

This is Golgin subfamily A member 6-like protein 2 (GOLGA6L2) from Homo sapiens (Human).